Consider the following 231-residue polypeptide: Thermonuclease (231 aa).

The first 26 residues, 1–26 (MLVMTEYLLSAGICMAIVSILLIGMA), serve as a signal peptide directing secretion. 2 propeptides span residues 27-63 (ISNVSKGQYAKRFFFFATSCLVLTLVVVSSLSSSANA) and 64-82 (SQTDNGVNRSGSEDPTVYS). Over residues 61–73 (ANASQTDNGVNRS) the composition is skewed to polar residues. The disordered stretch occupies residues 61-86 (ANASQTDNGVNRSGSEDPTVYSATST). D103 is a binding site for Ca(2+). R117 is a catalytic residue. Ca(2+) contacts are provided by D122 and T123. Catalysis depends on residues E125 and R169. Basic and acidic residues predominate over residues 203-219 (HEQHLRKSEAQAKKEKL). The disordered stretch occupies residues 203 to 231 (HEQHLRKSEAQAKKEKLNIWSEDNADSGQ).

It belongs to the thermonuclease family. The cofactor is Ca(2+).

Its subcellular location is the secreted. The protein resides in the membrane. It catalyses the reaction Endonucleolytic cleavage to nucleoside 3'-phosphates and 3'-phosphooligonucleotide end-products.. Functionally, enzyme that catalyzes the hydrolysis of both DNA and RNA at the 5' position of the phosphodiester bond. This Staphylococcus aureus protein is Thermonuclease.